The following is a 481-amino-acid chain: WD repeat-containing protein 55 homolog (481 aa).

The segment at 1-116 (MHTHNHFKTP…NRDVETNFDL (116 aa)) is disordered. 3 stretches are compositionally biased toward acidic residues: residues 12-23 (DAEEVDDLDDEM), 31-46 (IEQEVLFESDSDDDGF), and 68-81 (DSFDPNAEDSDSDD). WD repeat units follow at residues 144-183 (KLEDFVTDISFHPERNIIALATIIGDVHLYEYANEGNKLI), 188-227 (VHSKACRDVEFTEDGRNLLTCSKDKCVMVTDMETEKLKKL), 231-269 (AHDDAINTLHVLNENLFATGDDAGTVKLWDLRTKQHVFE), 272-311 (QIDDQVTQLLSNEQNTLLLATSADGYLTTFNIPGRKLYVQ), 314-353 (PYEEELNCMGIYRGDSKLVVGTSKGKLYSYNWGSFGYHCD), and 398-437 (QHNMPIEALDVNSTGELLASSSHNNDVRFWNVKYFEDFGD).

Belongs to the WD repeat WDR55 family.

The polypeptide is WD repeat-containing protein 55 homolog (Drosophila ananassae (Fruit fly)).